The primary structure comprises 326 residues: ELAV-like protein 1-B (326 aa).

RRM domains lie at 20-98, 106-186, and 244-322; these read TNLI…FARP, ANLY…FAAN, and WCIF…FKTS.

It belongs to the RRM elav family. Interacts (via RRM3) with cirbp. Unable to form oligomers. Part of a ribonucleoprotein (RNP) complex, at least composed of elavl1/elrA and/or elavl2/elrB, igf2bp3/vg1RBP, ddx6/Xp54, ybx2/frgy2, lsm14b/rap55b and, in a subset of RNP complexes, stau1/staufen.

Its subcellular location is the cytoplasm. The protein resides in the cell cortex. Functionally, RNA-binding protein that binds to the 3'-UTR region of mRNAs and increases their stability. Involved in embryonic stem cells (ESCs) differentiation: preferentially binds mRNAs that are not methylated by N6-methyladenosine (m6A), stabilizing them, promoting ESCs differentiation. Binds to poly-U elements and AU-rich elements (AREs) in the 3'-UTR of target mRNAs. Acts cooperatively with cribp to stabilize AU-rich sequence (ARE)-containing mRNAs. May play a role during gastrulation. Required for the vegetal localization of vg1 mRNA. This chain is ELAV-like protein 1-B (elavl1-b), found in Xenopus laevis (African clawed frog).